The primary structure comprises 160 residues: Ribosomal RNA large subunit methyltransferase H (160 aa).

S-adenosyl-L-methionine contacts are provided by residues L76, G108, and 127 to 132 (FGRMTF).

This sequence belongs to the RNA methyltransferase RlmH family. Homodimer.

It is found in the cytoplasm. It catalyses the reaction pseudouridine(1915) in 23S rRNA + S-adenosyl-L-methionine = N(3)-methylpseudouridine(1915) in 23S rRNA + S-adenosyl-L-homocysteine + H(+). Functionally, specifically methylates the pseudouridine at position 1915 (m3Psi1915) in 23S rRNA. The chain is Ribosomal RNA large subunit methyltransferase H from Methylocella silvestris (strain DSM 15510 / CIP 108128 / LMG 27833 / NCIMB 13906 / BL2).